Here is a 533-residue protein sequence, read N- to C-terminus: Frizzled/smoothened-like sans CRD protein H (533 aa).

The first 21 residues, 1–21, serve as a signal peptide directing secretion; it reads MFIKFYFFIIFLILNFKNNYA. The Extracellular segment spans residues 22-103; that stretch reads SPTLLDSVLS…GDWTTMMDMS (82 aa). A glycan (N-linked (GlcNAc...) asparagine) is linked at N76. The helical transmembrane segment at 104–124 threads the bilayer; the sequence is LIVATISFFASIFLILTYSPL. The Cytoplasmic segment spans residues 125–134; sequence MNPSYNNRHT. Residues 135–155 form a helical membrane-spanning segment; the sequence is IGILSMSFGIFLIMFTDMYNL. Residues 156–177 are Extracellular-facing; that stretch reads KKRFTLGCPSETRYAIQNDADC. Residues 178–198 traverse the membrane as a helical segment; that stretch reads LITGLIFQFGCVSAVFFWTAL. Residues 199 to 216 are Cytoplasmic-facing; that stretch reads SLDLYFQITNRNISRKYD. The chain crosses the membrane as a helical span at residues 217-237; it reads LYYFIGVNLISLIFTFVPVIS. At 238-259 the chain is on the extracellular side; sequence KSYGYGDFALGCWILDFNYALG. The helical transmembrane segment at 260–280 threads the bilayer; the sequence is CFWIPLSVCLIFSTVVVLMIL. Topologically, residues 281 to 302 are cytoplasmic; it reads YEVYKIYKASNQKTSLKGHIKP. Residues 303 to 323 form a helical membrane-spanning segment; sequence LLCLISNCFEFFYVFGYSLYL. At 324-360 the chain is on the extracellular side; that stretch reads ATKLTELHDNMDAYIKCLFLNSQNDPDSYTCPDHRLK. Residues 361–381 form a helical membrane-spanning segment; it reads LGPQFLFFLSLRLLGVSGIVF. Over 382–533 the chain is Cytoplasmic; it reads YGTNSKVRKI…LTNINTIDNV (152 aa). Residues 454 to 533 are disordered; the sequence is IIVTPGGDDD…LTNINTIDNV (80 aa). Positions 466–518 are enriched in low complexity; it reads NNNNNNNNNNNNNNNNNNNNNNNNNNNNNNNNNNNNNNNNNNNNNSNENNENN. A coiled-coil region spans residues 501 to 528; the sequence is NNNNNNNNNNSNENNENNTQEIELTNIN. A compositionally biased stretch (polar residues) spans 519–533; the sequence is TQEIELTNINTIDNV.

This sequence belongs to the G-protein coupled receptor Fz/Smo family.

The protein localises to the membrane. The protein is Frizzled/smoothened-like sans CRD protein H (fscH) of Dictyostelium discoideum (Social amoeba).